The chain runs to 248 residues: MSVPHLRLGVNIDHVATVRNARGGEYPDPIRAAKIAEQAGADGITAHLREDRRHITDADIDGLMAALSVPLNFEMAATDEMQKIALRHKPHAVCIVPEKREERTTEGGLEVAREENRLAHFIAPLREVGCRVSIFIAADRRQVEAAHRIGAQVIELHTGAYCDAHAEGDFATRDRELEALREMSAFAHSLGLEVHAGHGLTYDTVQPVAAFPEVMELNIGHFLIGEAIFRGLHPAIAEMRRLMDEARA.

Asn-11 is a 3-amino-2-oxopropyl phosphate binding site. A 1-deoxy-D-xylulose 5-phosphate-binding site is contributed by 13-14 (DH). Arg-22 contributes to the 3-amino-2-oxopropyl phosphate binding site. The active-site Proton acceptor is the His-47. 2 residues coordinate 1-deoxy-D-xylulose 5-phosphate: Arg-49 and His-54. Glu-74 functions as the Proton acceptor in the catalytic mechanism. Position 104 (Thr-104) interacts with 1-deoxy-D-xylulose 5-phosphate. Residue His-198 is the Proton donor of the active site. Residues Gly-199 and 220–221 (GH) contribute to the 3-amino-2-oxopropyl phosphate site.

The protein belongs to the PNP synthase family. Homooctamer; tetramer of dimers.

It localises to the cytoplasm. It catalyses the reaction 3-amino-2-oxopropyl phosphate + 1-deoxy-D-xylulose 5-phosphate = pyridoxine 5'-phosphate + phosphate + 2 H2O + H(+). Its pathway is cofactor biosynthesis; pyridoxine 5'-phosphate biosynthesis; pyridoxine 5'-phosphate from D-erythrose 4-phosphate: step 5/5. Functionally, catalyzes the complicated ring closure reaction between the two acyclic compounds 1-deoxy-D-xylulose-5-phosphate (DXP) and 3-amino-2-oxopropyl phosphate (1-amino-acetone-3-phosphate or AAP) to form pyridoxine 5'-phosphate (PNP) and inorganic phosphate. In Ruegeria pomeroyi (strain ATCC 700808 / DSM 15171 / DSS-3) (Silicibacter pomeroyi), this protein is Pyridoxine 5'-phosphate synthase.